A 311-amino-acid chain; its full sequence is Inositol oxygenase 1 (311 aa).

Positions 1–11 are enriched in basic and acidic residues; it reads MTILIDRHSDQ. Residues 1-29 are disordered; sequence MTILIDRHSDQNDAGDEIVEKNQGNGKEE. Substrate-binding positions include Arg-52 and 109-111; that span reads DES. Fe cation contacts are provided by His-122, His-147, and Asp-148. Substrate contacts are provided by residues Lys-151 and 168–169; that span reads GD. Residues His-220, His-246, and Asp-279 each contribute to the Fe cation site. 246–247 serves as a coordination point for substrate; sequence HS.

It belongs to the myo-inositol oxygenase family. Fe cation serves as cofactor. In terms of tissue distribution, expressed in roots, young leaves, stems, flowers and siliques.

It is found in the cytoplasm. It carries out the reaction myo-inositol + O2 = D-glucuronate + H2O + H(+). It functions in the pathway polyol metabolism; myo-inositol degradation into D-glucuronate; D-glucuronate from myo-inositol: step 1/1. Functionally, catalyzes the oxygenative cleavage of myo-inositol to D-glucuronate. Involved in the biosynthesis of UDP-glucuronic acid (UDP-GlcA), providing nucleotide sugars for cell-wall polymers. May be also involved in plant ascorbate biosynthesis. The chain is Inositol oxygenase 1 (MIOX1) from Arabidopsis thaliana (Mouse-ear cress).